Here is a 402-residue protein sequence, read N- to C-terminus: Protein HAIKU1 (402 aa).

4 disordered regions span residues 1-44 (MDRP…LQTQ), 63-135 (TGSP…QQPM), 160-266 (SSLG…LVPS), and 346-402 (QPLT…WNDY). A compositionally biased stretch (polar residues) spans 24 to 44 (LHQSTFAASTSNGAAPRLQTQ). Positions 55–64 (FRSIVQQLTG) match the VQ motif. Positions 76-87 (QNNSLRPQNTRL) are enriched in polar residues. Over residues 103 to 113 (VPLPSMAPPQS) the composition is skewed to pro residues. Over residues 160–173 (SSLGDSGPNANQMQ) the composition is skewed to polar residues. A compositionally biased stretch (low complexity) spans 218–240 (MPAQSQSQSQPQPQPQPQQHMMP). Pro residues predominate over residues 257-266 (YLPPPGLVPS). A compositionally biased stretch (polar residues) spans 349-358 (TPNFSFSQIA). The segment covering 371–380 (QGPPQPPPSP) has biased composition (pro residues). The segment covering 381–390 (GLMFPLSPSG) has biased composition (low complexity).

Interacts with WRKY10. Interacts with MPK6.

Its subcellular location is the nucleus. Modulates seed size by negatively regulating the cellularization of syncytial endosperm. May function by binding and modulating the activity of WRKY10 transcription factor. The sequence is that of Protein HAIKU1 from Arabidopsis thaliana (Mouse-ear cress).